Consider the following 303-residue polypeptide: Oxygen-dependent coproporphyrinogen-III oxidase (303 aa).

Ser-93 contributes to the substrate binding site. A divalent metal cation-binding residues include His-97 and His-107. Catalysis depends on His-107, which acts as the Proton donor. 109–111 (NVR) is a substrate binding site. Residues His-146 and His-176 each coordinate a divalent metal cation. The interval 241–276 (YVEFNLVYDRGTLFGLQSGGRTESILMSLPPQVRWG) is important for dimerization. A substrate-binding site is contributed by 259–261 (GGR).

It belongs to the aerobic coproporphyrinogen-III oxidase family. Homodimer. Requires a divalent metal cation as cofactor.

It localises to the cytoplasm. The catalysed reaction is coproporphyrinogen III + O2 + 2 H(+) = protoporphyrinogen IX + 2 CO2 + 2 H2O. The protein operates within porphyrin-containing compound metabolism; protoporphyrin-IX biosynthesis; protoporphyrinogen-IX from coproporphyrinogen-III (O2 route): step 1/1. Its function is as follows. Involved in the heme biosynthesis. Catalyzes the aerobic oxidative decarboxylation of propionate groups of rings A and B of coproporphyrinogen-III to yield the vinyl groups in protoporphyrinogen-IX. The polypeptide is Oxygen-dependent coproporphyrinogen-III oxidase (Pseudomonas putida (strain ATCC 47054 / DSM 6125 / CFBP 8728 / NCIMB 11950 / KT2440)).